A 176-amino-acid polypeptide reads, in one-letter code: Sigma intracellular receptor 2 (176 aa).

Residues 1 to 9 (MGTLGARRG) lie on the Cytoplasmic side of the membrane. A helical membrane pass occupies residues 10 to 30 (LEWFLGFYFLSHIPITLLMDL). The EXPERA domain maps to 10-158 (LEWFLGFYFL…PYFLIPLILL (149 aa)). Topologically, residues 31–68 (QGVLPRDLYPVELRNLQQWYIEEFKDPLLQTPPAWFKS) are lumenal. A helical membrane pass occupies residues 69–89 (FLFCELVFQLPFFPIAAYAFF). Val75 and Gln77 together coordinate cholesterol. Over 90-99 (KGGCKWIRTP) the chain is Cytoplasmic. Residues 100–120 (AIIYSVHTMTTLIPILSTLLL) form a helical membrane-spanning segment. Residues 121–141 (DDFSKASHFRGQGPKTFQERL) are Lumenal-facing. The chain crosses the membrane as a helical span at residues 142 to 162 (FLISVYIPYFLIPLILLLFMV). The Cytoplasmic segment spans residues 163–176 (RNPYYKSEEKRKKK). The ER retention motif motif lies at 172–176 (KRKKK).

This sequence belongs to the TMEM97/sigma-2 receptor family. Homodimer. Interacts with NPC1; the interaction impairs NPC1-mediated cholesterol transport. Interacts with PGRMC1 and LDLR; the interaction increases LDL internalization. Interacts with histatin 1/HTN1; the interaction induces HTN1-stimulating wound healing. Interacts with TSPO.

Its subcellular location is the rough endoplasmic reticulum membrane. It is found in the nucleus membrane. In terms of biological role, sigma-2 receptor which contributes to ameliorate dysfunctional cellular processes and slow degenerative progression by regulating cell functions including cholesterol biosynthesis/trafficking, membrane trafficking, autophagy, lipid membrane-bound protein trafficking, and receptor stabilization at the cell surface. Forms a ternary complex with PGRMC1 receptor and low density lipoprotein receptor/LDLR at the plasma membrane, which increases LDLR-mediated LDL cholesterol internalization. Decreases lysosomal sterol transporter NPC1 availability to the cell, probably through NPC1-binding, hence controlling lipid transport, including cholesterol and LBPA, outside of late endosome/lysosome. Binds regio- and stereoselective ligand 20(S)-hydroxycholesterol (20(S)-OHC) which enhances TMEM97-NPC1 interaction and decreases TMEM97-PGRMC1 and TMEM97-TSPO interactions, thereby linking OHC binding to cholesterol homeostasis. Also able to bind cholesterol. Binds histatin 1 (Hst 1)/HN1 salivary peptide at the ER membrane, which is critical for increasing mitochondria-ER contacts and stimulating Hst1 wound healing properties. May alter the activity of some cytochrome P450 proteins. Although shows homologies with sterol isomerases (EXPERA domain), not able to catalyze sterol isomerization. However, may act as sensors of these molecules. Acts as a quality control factor in the ER, promoting the proteolytic degradation of nonproductive and extramitochondrial precursor proteins in the ER membrane thus removing them from the ER surface. This Bos taurus (Bovine) protein is Sigma intracellular receptor 2 (TMEM97).